We begin with the raw amino-acid sequence, 956 residues long: MTLLLLPLLLASLLASCSCNKANKHKPWIEAEYQGIVMENDNTVLLNPPLFALDKDAPLRYAGEICGFRLHGSGVPFEAVILDKATGEGLIRAKEPVDCEAQKEHTFTIQAYDCGEGPDGANTKKSHKATVHVRVNDVNEFAPVFVERLYRAAVTEGKLYDRILRVEAIDGDCSPQYSQICYYEILTPNTPFLIDNDGNIENTEKLQYSGERLYKFTVTAYDCGKKRAADDAEVEIQVKPTCKPSWQGWNKRIEYAPGAGSLALFPGIRLETCDEPLWNIQATIELQTSHVAKGCDRDNYSERALRKLCGAATGEVDLLPMPGPNANWTAGLSVHYSQDSSLIYWFNGTQAVQVPLGGPSGLGSGPQDSLSDHFTLSFWMKHGVTPNKGKKEEETIVCNTVQNEDGFSHYSLTVHGCRIAFLYWPLLESARPVKFLWKLEQVCDDEWHHYALNLEFPTVTLYTDGISFDPALIHDNGLIHPPRREPALMIGACWTEEKNKEKEKGDNSTDTTQGDPLSIHHYFHGYLAGFSVRSGRLESREVIECLYACREGLDYRDFESLGKGMKVHVNPSQSLLTLEGDDVETFNHALQHVAYMNTLRFATPGVRPLRLTTAVKCFSEESCVSIPEVEGYVVVLQPDAPQILLSGTAHFARPAVDFEGTNGVPLFPDLQITCSISHQVEAKKDESWQGTVTDTRMSDEIVHNLDGCEISLVGDDLDPERESLLLDTTSLQQRGLELTNTSAYLTIAGVESITVYEEILRQARYRLRHGAALYTRKFRLSCSEMNGRYSSNEFIVEVNVLHSMNRVAHPSHVLSSQQFLHRGHQPPPEMAGHSLASSHRNSMIPSAATLIIVVCVGFLVLMVVLGLVRIHSLHRRVSGAGGPPGASSDPKDPDLFWDDSALTIIVNPMESYQNRQSCVTGAVGGQQEDEDSSDSEVADSPSSDERRIIETPPHRY.

The signal sequence occupies residues 1–19 (MTLLLLPLLLASLLASCSC). Over 1–30 (MTLLLLPLLLASLLASCSCNKANKHKPWIE) the chain is Cytoplasmic. The Extracellular portion of the chain corresponds to 20 to 847 (NKANKHKPWI…SHRNSMIPSA (828 aa)). 2 Cadherin domains span residues 29 to 145 (IEAE…APVF) and 146 to 246 (VERL…KPSW). The helical intramembrane region spans 31-51 (AEYQGIVMENDNTVLLNPPLF). Residues 52 to 71 (ALDKDAPLRYAGEICGFRLH) lie on the Cytoplasmic side of the membrane. The segment at residues 72-94 (GSGVPFEAVILDKATGEGLIRAK) is an intramembrane region (helical). Topologically, residues 95–151 (EPVDCEAQKEHTFTIQAYDCGEGPDGANTKKSHKATVHVRVNDVNEFAPVFVERLYR) are cytoplasmic. The helical intramembrane region spans 152 to 172 (AAVTEGKLYDRILRVEAIDGD). The Cytoplasmic segment spans residues 173-255 (CSPQYSQICY…WQGWNKRIEY (83 aa)). Residues 256–276 (APGAGSLALFPGIRLETCDEP) form a helical membrane-spanning segment. The Lumenal portion of the chain corresponds to 277–364 (LWNIQATIEL…PLGGPSGLGS (88 aa)). Residues Asn-299, Asn-327, Asn-347, Asn-507, and Asn-740 are each glycosylated (N-linked (GlcNAc...) asparagine). A helical transmembrane segment spans residues 848-868 (ATLIIVVCVGFLVLMVVLGLV). Over 869–956 (RIHSLHRRVS…RIIETPPHRY (88 aa)) the chain is Cytoplasmic. Residues 916 to 956 (QSCVTGAVGGQQEDEDSSDSEVADSPSSDERRIIETPPHRY) form a disordered region. Acidic residues predominate over residues 927–937 (QEDEDSSDSEV). The segment covering 943 to 956 (SDERRIIETPPHRY) has biased composition (basic and acidic residues).

Belongs to the calsyntenin family. Interacts (via cadherin domains) with both alpha and beta isoforms of neurexins (NRXN1, NRXN2 and NRXN3). Directly interacts with APBA2. Forms a tripartite complex with APBA2 and APP. Interacts with low affinity with KLC1. Interacts with SLC23A2/SVCT2. As to quaternary structure, interacts with CIDEA; inhibiting the lipid transferase activity of CIDEA. Interacts with CIDEC; inhibiting the lipid transferase activity of CIDEC. Post-translationally, proteolytically processed under normal cellular conditions. A primary zeta-cleavage generates a large extracellular (soluble) N-terminal domain (sAlc) and a short C-terminal transmembrane fragment (CTF1). A secondary cleavage catalyzed by gamma-secretase within the transmembrane domain releases the beta-Alc-beta chain in the extracellular milieu and produces an intracellular fragment (AlcICD). This processing is strongly suppressed in the tripartite complex formed with APBA2 and APP, which seems to prevent the association with gamma-secretase. In terms of processing, ubiquitinated: endoplasmic reticulum-localized protein is ubiquitinated and degraded by the endoplasmic reticulum-associated degradation (ERAD) pathway. According to PubMed:12498782, expressed predominantly in the brain and in kidney. Low levels in heart, skeletal muscle, liver, placenta, pancreas and lung. According to PubMed:12972431, predominant expression in brain, and only marginal in kidney. In brain, present throughout all cortical layers, highest levels in GABAergic neurons (based on morphology and distribution pattern). As to expression, expression is restricted to adipose tissue, with high expression in multilocular thermogenic adipocytes (brown adipose tissue).

Its subcellular location is the postsynaptic cell membrane. It is found in the endoplasmic reticulum membrane. The protein localises to the golgi apparatus membrane. It localises to the cell projection. The protein resides in the dendrite. Its subcellular location is the lipid droplet. Postsynaptic adhesion molecule that binds to presynaptic neurexins to mediate both excitatory and inhibitory synapse formation. Promotes synapse development by acting as a cell adhesion molecule at the postsynaptic membrane, which associates with both neurexin-alpha and neurexin-beta proteins at the presynaptic membrane. Regulates the balance between excitatory and inhibitory synapses by inhibiting formation of excitatory parallel-fiber synapses and promoting formation of inhibitory synapses in the same neuron. May also be involved in ascorbate (vitamin C) uptake via its interaction with SLC23A2/SVCT2. Complex formation with APBA2 and APP, stabilizes APP metabolism and enhances APBA2-mediated suppression of beta-APP40 secretion, due to the retardation of intracellular APP maturation. Functionally, adipose-specific isoform that plays a key role in adaptive thermogenesis. Facilitates the efficient use of stored triglyceride by promoting multilocular morphology of thermogenic adipocytes: acts by inhibiting the activity of CIDEA and CIDEC on lipid droplets, thereby preventing lipid droplet fusion and facilitating lipid utilization. May also participate in adaptive thermogenesis by promoting sympathetic innervation of thermogenic adipose tissue: acts by driving secretion of neurotrophic factor S100B from brown adipocytes, stimulating neurite outgrowth from sympathetic neurons. This is Calsyntenin-3 from Homo sapiens (Human).